The following is a 233-amino-acid chain: Protein FAM204A (233 aa).

A disordered region spans residues 1 to 126; that stretch reads MWSGLLPPGL…HSEPSSNETQ (126 aa). Acidic residues predominate over residues 13-24; that stretch reads SDAESNSEDEAT. Residues 39–58 are compositionally biased toward basic and acidic residues; the sequence is ESIRKTEIIDFSTDEPKTET. A compositionally biased stretch (basic residues) spans 97–109; it reads FRGKRRKRSRKDK. Residues 144 to 164 are a coiled coil; it reads VKRKKVEKSGLEKRIDQAVEE.

This chain is Protein FAM204A (FAM204A), found in Homo sapiens (Human).